The sequence spans 449 residues: Glutamate--tRNA ligase 2 (449 aa).

Residues Pro-17–Asn-27 carry the 'HIGH' region motif. The 'KMSKS' region signature appears at Ala-248 to Arg-252. Residue Lys-251 coordinates ATP.

It belongs to the class-I aminoacyl-tRNA synthetase family. Glutamate--tRNA ligase type 1 subfamily. In terms of assembly, monomer.

The protein localises to the cytoplasm. It carries out the reaction tRNA(Glu) + L-glutamate + ATP = L-glutamyl-tRNA(Glu) + AMP + diphosphate. Its function is as follows. Catalyzes the attachment of glutamate to tRNA(Glu) in a two-step reaction: glutamate is first activated by ATP to form Glu-AMP and then transferred to the acceptor end of tRNA(Glu). This chain is Glutamate--tRNA ligase 2, found in Jannaschia sp. (strain CCS1).